The sequence spans 121 residues: MLESYFPIFVVISIAIILAVVLLSIGKIIGPKRNNPEKLTPYESGMDPVGSTRTRVTVRFYLVAMIFIVFDIEVIFMYPWAVSFRELSGFYGLIPMVTFVLILLAGYYYILKKKALDWDEE.

A run of 3 helical transmembrane segments spans residues 6 to 26 (FPIFVVISIAIILAVVLLSIG), 62 to 82 (LVAMIFIVFDIEVIFMYPWAV), and 90 to 110 (FYGLIPMVTFVLILLAGYYYI).

The protein belongs to the complex I subunit 3 family. NDH-1 is composed of 14 different subunits. Subunits NuoA, H, J, K, L, M, N constitute the membrane sector of the complex.

It is found in the cell inner membrane. It carries out the reaction a quinone + NADH + 5 H(+)(in) = a quinol + NAD(+) + 4 H(+)(out). Its function is as follows. NDH-1 shuttles electrons from NADH, via FMN and iron-sulfur (Fe-S) centers, to quinones in the respiratory chain. The immediate electron acceptor for the enzyme in this species is believed to be a menaquinone. Couples the redox reaction to proton translocation (for every two electrons transferred, four hydrogen ions are translocated across the cytoplasmic membrane), and thus conserves the redox energy in a proton gradient. The protein is NADH-quinone oxidoreductase subunit A 1 of Chloroherpeton thalassium (strain ATCC 35110 / GB-78).